Consider the following 273-residue polypeptide: Pantothenate synthetase (273 aa).

27 to 34 is a binding site for ATP; sequence MGALHAGH. Catalysis depends on histidine 34, which acts as the Proton donor. Glutamine 58 is a (R)-pantoate binding site. Residue glutamine 58 participates in beta-alanine binding. 144–147 provides a ligand contact to ATP; it reads GKKD. Glutamine 150 is a (R)-pantoate binding site. ATP-binding positions include valine 173 and 181–184; that span reads LSSR.

Belongs to the pantothenate synthetase family. As to quaternary structure, homodimer.

Its subcellular location is the cytoplasm. The enzyme catalyses (R)-pantoate + beta-alanine + ATP = (R)-pantothenate + AMP + diphosphate + H(+). It participates in cofactor biosynthesis; (R)-pantothenate biosynthesis; (R)-pantothenate from (R)-pantoate and beta-alanine: step 1/1. Its function is as follows. Catalyzes the condensation of pantoate with beta-alanine in an ATP-dependent reaction via a pantoyl-adenylate intermediate. The sequence is that of Pantothenate synthetase from Campylobacter hominis (strain ATCC BAA-381 / DSM 21671 / CCUG 45161 / LMG 19568 / NCTC 13146 / CH001A).